The chain runs to 167 residues: MSQHKMKIHGQYVKDFSFENPNSPFLPSSKAPDINVMVNINSAKLEGTENKKGISEEKPFHEITLHIEAKATVKDEDVKDDIAFICEVKYCGIFSIENFTELSEEEVRQALFIGGPTFLFPFAREIIARTTSSGGFPPLMLDPIDFETMYQQQSQQQKSSASNSNFN.

The protein belongs to the SecB family. In terms of assembly, homotetramer, a dimer of dimers. One homotetramer interacts with 1 SecA dimer.

The protein resides in the cytoplasm. Functionally, one of the proteins required for the normal export of preproteins out of the cell cytoplasm. It is a molecular chaperone that binds to a subset of precursor proteins, maintaining them in a translocation-competent state. It also specifically binds to its receptor SecA. This chain is Protein-export protein SecB, found in Wolbachia pipientis subsp. Culex pipiens (strain wPip).